We begin with the raw amino-acid sequence, 137 residues long: Profilin-3 (137 aa).

The protein belongs to the profilin family. In terms of assembly, interacts with ACTRT3.

The protein resides in the cytoplasm. It localises to the cytoskeleton. Its subcellular location is the nucleus. Binds to actin and affects the structure of the cytoskeleton. Binds to poly-L-proline, phosphatidylinositol 3-phosphate (PtdIns(3)P), phosphatidylinositol 4,5-bisphosphate (PtdIns(4,5)P2) and phosphatidylinositol 4-phosphate (PtdIns(4)P). Slightly reduces actin polymerization. May be involved in spermatogenesis. This Bos taurus (Bovine) protein is Profilin-3 (PFN3).